The chain runs to 212 residues: Protein-L-isoaspartate O-methyltransferase (212 aa).

Residue Ser-60 is part of the active site.

The protein belongs to the methyltransferase superfamily. L-isoaspartyl/D-aspartyl protein methyltransferase family.

The protein localises to the cytoplasm. The enzyme catalyses [protein]-L-isoaspartate + S-adenosyl-L-methionine = [protein]-L-isoaspartate alpha-methyl ester + S-adenosyl-L-homocysteine. Functionally, catalyzes the methyl esterification of L-isoaspartyl residues in peptides and proteins that result from spontaneous decomposition of normal L-aspartyl and L-asparaginyl residues. It plays a role in the repair and/or degradation of damaged proteins. This Methanococcus maripaludis (strain C6 / ATCC BAA-1332) protein is Protein-L-isoaspartate O-methyltransferase.